Consider the following 221-residue polypeptide: MALPNQQTVDYPSFKLVIVGDGGTGKTTFVKRHLTGEFEKKYEPTIGVEVHPLDFFTNCGKIRFYCWDTAGQEKFGGLRDGYYIHGQCAIIMFDVTARLTYKNVPTWHRDLCRVCENIPIVLCGNKVDVKNRQVKAKQVTFHRKKNLQYYEISAKSNYNFEKPFLYLARKLAGDQNLHFVESPALAPPEVHLDIAAQQQNEADLAAAAAQPLPDDDDDAFE.

Residues 10–174 (DYPSFKLVIV…LYLARKLAGD (165 aa)) form the Small GTPase Ran-type domain. GTP is bound at residue 21-28 (DGGTGKTT). The switch-I stretch occupies residues 40 to 48 (KKYEPTIGV). GTP-binding positions include Gly-71, 125–128 (NKVD), and 153–155 (SAK). Residues 71–87 (GQEKFGGLRDGYYIHGQ) are switch-II. Residues 202–212 (ADLAAAAAQPL) show a composition bias toward low complexity. Positions 202-221 (ADLAAAAAQPLPDDDDDAFE) are disordered.

The protein belongs to the small GTPase superfamily. Ran family. Found in a nuclear export complex with RanGTP, exportin and pre-miRNA. Interacts with RanBP1a and RanBP1b. Interacts with PHRIP1. Interacts with KPNB1. Binds to PHIP1.

Its subcellular location is the nucleus. It is found in the nucleus envelope. GTP-binding protein involved in nucleocytoplasmic transport. Required for the import of protein into the nucleus and also for RNA export. Involved in chromatin condensation and control of cell cycle. This chain is GTP-binding nuclear protein Ran-2, found in Arabidopsis thaliana (Mouse-ear cress).